The following is a 186-amino-acid chain: Elongation factor P (186 aa).

The protein belongs to the elongation factor P family.

It is found in the cytoplasm. Its pathway is protein biosynthesis; polypeptide chain elongation. Involved in peptide bond synthesis. Stimulates efficient translation and peptide-bond synthesis on native or reconstituted 70S ribosomes in vitro. Probably functions indirectly by altering the affinity of the ribosome for aminoacyl-tRNA, thus increasing their reactivity as acceptors for peptidyl transferase. This chain is Elongation factor P, found in Neisseria meningitidis serogroup A / serotype 4A (strain DSM 15465 / Z2491).